We begin with the raw amino-acid sequence, 365 residues long: Probable L-tyrosine/L-aspartate decarboxylase (365 aa).

Lys224 carries the N6-(pyridoxal phosphate)lysine modification.

Belongs to the group II decarboxylase family. MfnA subfamily. The cofactor is pyridoxal 5'-phosphate.

The enzyme catalyses L-tyrosine + H(+) = tyramine + CO2. It carries out the reaction L-aspartate + H(+) = beta-alanine + CO2. It functions in the pathway cofactor biosynthesis; methanofuran biosynthesis. Its pathway is cofactor biosynthesis; coenzyme A biosynthesis. Catalyzes the decarboxylation of L-tyrosine to produce tyramine for methanofuran biosynthesis. Can also catalyze the decarboxylation of L-aspartate to produce beta-alanine for coenzyme A (CoA) biosynthesis. The sequence is that of Probable L-tyrosine/L-aspartate decarboxylase from Methanoregula boonei (strain DSM 21154 / JCM 14090 / 6A8).